We begin with the raw amino-acid sequence, 380 residues long: MMLGNMTFTQTILHELLRQHNMTKNEFIERFGLPPLVYVPELSPGAKTVTLVFYVIIFLAALLGNTLVVVVVWKNKVMRTTMNIFICSLAASDLLITIVCIPVTLMQNMLQNWIMGDFMCKLVPFIQTIAVASSILTLTGIAIERYYAIIHPLKVKYLLSKTRAGIILALVWVVSVGVATPMLFVHKAEEIHDFLYEQRFVTCQEKWWGQTQQTSYTIFNLVVLFIIPLLTMTSLYIRIAHRLWVQQPVGVTGNFAHGNSVRRKRQAVKMLVVVVLLFAVCWLPYHTVTVMNELTGLRLEEKSAKLLIAIVQLIAFSNSFNNPVVYAILNENFKKNFMTMLRCRVNRVSPQQVTPNTLQTPLEQSTRSCRLPAGAPNQQI.

The Extracellular portion of the chain corresponds to M1–L51. 2 N-linked (GlcNAc...) asparagine glycosylation sites follow: N5 and N21. A helical membrane pass occupies residues V52–V72. Topologically, residues W73–N83 are cytoplasmic. A helical transmembrane segment spans residues I84–T104. The Extracellular portion of the chain corresponds to L105–L122. A disulfide bond links C120 and C203. Residues V123–I143 form a helical membrane-spanning segment. The Cytoplasmic portion of the chain corresponds to E144–A164. A helical transmembrane segment spans residues G165–V185. The Extracellular portion of the chain corresponds to H186–Y216. Residues T217–I237 traverse the membrane as a helical segment. At R238 to K269 the chain is on the cytoplasmic side. Residues M270 to V290 form a helical membrane-spanning segment. Residues M291–K305 are Extracellular-facing. The chain crosses the membrane as a helical span at residues L306–Y326. The Cytoplasmic portion of the chain corresponds to A327–I380.

Belongs to the G-protein coupled receptor 1 family.

It is found in the cell membrane. In terms of biological role, receptor for QRFP-like peptide. The activity of this receptor is mediated by G proteins which activate a phosphatidyl-inositol-calcium second messenger system. The polypeptide is QRFP-like peptide receptor (Branchiostoma floridae (Florida lancelet)).